The chain runs to 212 residues: Protein GrpE (212 aa).

The interval 1 to 69 is disordered; sequence MAEMSNNKTS…LESAKKEIES (69 aa). The span at 40–60 shows a compositional bias: low complexity; the sequence is ETTQTESMETAETETSLQTEL.

It belongs to the GrpE family. In terms of assembly, homodimer.

The protein resides in the cytoplasm. Participates actively in the response to hyperosmotic and heat shock by preventing the aggregation of stress-denatured proteins, in association with DnaK and GrpE. It is the nucleotide exchange factor for DnaK and may function as a thermosensor. Unfolded proteins bind initially to DnaJ; upon interaction with the DnaJ-bound protein, DnaK hydrolyzes its bound ATP, resulting in the formation of a stable complex. GrpE releases ADP from DnaK; ATP binding to DnaK triggers the release of the substrate protein, thus completing the reaction cycle. Several rounds of ATP-dependent interactions between DnaJ, DnaK and GrpE are required for fully efficient folding. The polypeptide is Protein GrpE (Leptospira interrogans serogroup Icterohaemorrhagiae serovar Lai (strain 56601)).